A 226-amino-acid chain; its full sequence is ATP synthase F(0) complex subunit a (226 aa).

Helical transmembrane passes span 11 to 31 (SPELLMIPTALLSMLVPVLLI), 37 to 54 (LLGNRMTTAIAWLLMTIM), 72 to 92 (LTSLLLMILLSNLLGLLPYTF), 98 to 118 (LSMNMAMAIPLWMATIITGMT), 138 to 158 (IPFMIIIETISLLMRPLALGV), 178 to 198 (TLNFITSHITLSIMTYLLLFL), and 199 to 219 (LCILELAVACIQAYVFVLLII).

The protein belongs to the ATPase A chain family. Component of the ATP synthase complex composed at least of ATP5F1A/subunit alpha, ATP5F1B/subunit beta, ATP5MC1/subunit c (homooctomer), MT-ATP6/subunit a, MT-ATP8/subunit 8, ATP5ME/subunit e, ATP5MF/subunit f, ATP5MG/subunit g, ATP5MK/subunit k, ATP5MJ/subunit j, ATP5F1C/subunit gamma, ATP5F1D/subunit delta, ATP5F1E/subunit epsilon, ATP5PF/subunit F6, ATP5PB/subunit b, ATP5PD/subunit d, ATP5PO/subunit OSCP. ATP synthase complex consists of a soluble F(1) head domain (subunits alpha(3) and beta(3)) - the catalytic core - and a membrane F(0) domain - the membrane proton channel (subunits c, a, 8, e, f, g, k and j). These two domains are linked by a central stalk (subunits gamma, delta, and epsilon) rotating inside the F1 region and a stationary peripheral stalk (subunits F6, b, d, and OSCP). Interacts with DNAJC30; interaction is direct.

The protein resides in the mitochondrion inner membrane. The catalysed reaction is H(+)(in) = H(+)(out). Its function is as follows. Subunit a, of the mitochondrial membrane ATP synthase complex (F(1)F(0) ATP synthase or Complex V) that produces ATP from ADP in the presence of a proton gradient across the membrane which is generated by electron transport complexes of the respiratory chain. ATP synthase complex consist of a soluble F(1) head domain - the catalytic core - and a membrane F(1) domain - the membrane proton channel. These two domains are linked by a central stalk rotating inside the F(1) region and a stationary peripheral stalk. During catalysis, ATP synthesis in the catalytic domain of F(1) is coupled via a rotary mechanism of the central stalk subunits to proton translocation. With the subunit c (ATP5MC1), forms the proton-conducting channel in the F(0) domain, that contains two crucial half-channels (inlet and outlet) that facilitate proton movement from the mitochondrial intermembrane space (IMS) into the matrix. Protons are taken up via the inlet half-channel and released through the outlet half-channel, following a Grotthuss mechanism. The chain is ATP synthase F(0) complex subunit a from Lycodon semicarinatus (Ryukyu odd-tooth snake).